Reading from the N-terminus, the 1389-residue chain is CRISPR-associated endoribonuclease Cas13a (1389 aa).

Residues Met-1–Arg-347 form an NTD region. CrRNA is bound at residue Arg-219. 3 binds crRNA regions span residues Tyr-330–Lys-342, Lys-405–Tyr-408, and Tyr-432–Lys-436. The tract at residues Glu-348 to Thr-498 is helical-1. Active-site for pre-crRNA processing residues include Arg-438 and Lys-441. A crRNA-binding site is contributed by Lys-441. Positions Lys-471–Arg-475 are binds crRNA. Lys-489 is a crRNA binding site. The segment at Thr-499–Lys-636 is HEPN-like fold 1-I. Residues Thr-502–His-509 form a binds crRNA region. Residues Arg-597 and His-602 each act as for target ssRNA cleavage in the active site. Positions Ala-637–Lys-828 are helical-2. Gln-759 contacts crRNA. The HEPN-like fold 1-II stretch occupies residues Thr-829–Asn-899. The segment at Asn-853–Arg-858 is binds crRNA. Trp-865 provides a ligand contact to crRNA. Coiled coils occupy residues Thr-893 to Gln-920, Glu-968 to Ile-1046, and Lys-1101 to Lys-1131. The segment at Leu-900–Glu-1170 is linker. The tract at residues Glu-1170–Pro-1290 is HEPN-like fold 2. Active-site for target ssRNA cleavage residues include Arg-1278 and His-1283. 2 binds crRNA regions span residues Thr-1311–Ser-1316 and Lys-1338–Lys-1339.

This sequence belongs to the CRISPR-associated endoribonuclease Cas13a family. In terms of assembly, monomer. Mg(2+) is required as a cofactor.

With respect to regulation, RNase activity on target is decreased by EDTA. Target RNA acts as an activator for non-specific ssRNA degradation. Functionally, CRISPR (clustered regularly interspaced short palindromic repeat), is an adaptive immune system that provides protection against mobile genetic elements (viruses, transposable elements and conjugative plasmids). CRISPR clusters contain sequences complementary to antecedent mobile elements (spacers) and target invading nucleic acids. Unlike many single-component effectors, this CRISPR-Cas system targets RNA. CRISPR clusters are transcribed from pre-CRISPR RNA (crRNA) and processed into crRNA (optimally 28 nucleotides in this system) by this protein. This protein processes pre-crRNA at a 'non-typical' site 1 nucleotide upstream of the pre-crRNA stem-loop; it cleaves pre-crRNA from L.buccalis and L.wadei in a similar fashion, whereas the enzymes from the latter 2 bacteria cleave their own pre-crRNA 3 nt further upstream. When the appropriate target sequences are cloned into the CRISPR array, confers immunity to ssRNA(+) enterobacteria phage MS2. Cleaves linear target ssRNA in a crRNA-dependent fashion, preferentially before U residues; has no activity on partially dsRNA, ssDNA or dsDNA. RNA secondary structure surrounding the target influence the cleavage site and efficiency; unlike other CRISPR-Cas effectors Cas13a cleaves outside of the crRNA binding site. In the presence of a viable RNA target other RNAs are also degraded (called collateral RNA degradation), suggesting this type of CRISPR-Cas might also prevent viral spread by inducing programmed cell death or dormancy. This system has a 3' protospacer flanking site (PFS), it does not cleave when the 3' PFS is G (PFS is equivalent to PAM, the protospacer adjacent motif). Mutations of its active site residues results in an RNA-programmed RNA-binding protein. This Leptotrichia shahii (strain DSM 19757 / CCUG 47503 / CIP 107916 / JCM 16776 / LB37) protein is CRISPR-associated endoribonuclease Cas13a.